We begin with the raw amino-acid sequence, 152 residues long: Deoxyuridine 5'-triphosphate nucleotidohydrolase (152 aa).

Substrate is bound by residues Arg-71–Gly-73, Asn-84, Leu-88–Asp-90, and Met-98.

This sequence belongs to the dUTPase family. Mg(2+) serves as cofactor.

It carries out the reaction dUTP + H2O = dUMP + diphosphate + H(+). It participates in pyrimidine metabolism; dUMP biosynthesis; dUMP from dCTP (dUTP route): step 2/2. In terms of biological role, this enzyme is involved in nucleotide metabolism: it produces dUMP, the immediate precursor of thymidine nucleotides and it decreases the intracellular concentration of dUTP so that uracil cannot be incorporated into DNA. The protein is Deoxyuridine 5'-triphosphate nucleotidohydrolase of Shewanella sp. (strain MR-7).